Here is a 334-residue protein sequence, read N- to C-terminus: Ribosomal RNA small subunit methyltransferase H (334 aa).

S-adenosyl-L-methionine contacts are provided by residues 39–41 (GGH), Asp59, Phe83, Asp100, and Gln107. A disordered region spans residues 303–334 (ERTQAHGAERSDMRRAERPDARRAEHGEVLPP).

The protein belongs to the methyltransferase superfamily. RsmH family.

The protein resides in the cytoplasm. The enzyme catalyses cytidine(1402) in 16S rRNA + S-adenosyl-L-methionine = N(4)-methylcytidine(1402) in 16S rRNA + S-adenosyl-L-homocysteine + H(+). Functionally, specifically methylates the N4 position of cytidine in position 1402 (C1402) of 16S rRNA. This Verminephrobacter eiseniae (strain EF01-2) protein is Ribosomal RNA small subunit methyltransferase H.